Reading from the N-terminus, the 297-residue chain is Protein BCCIP homolog (297 aa).

The interval 1–40 is disordered; the sequence is MSANKQKKLSTMEVDPNEDVSSSSEDDDDDEPHPDAYKGN.

The protein belongs to the BCP1 family.

This chain is Protein BCCIP homolog, found in Drosophila melanogaster (Fruit fly).